Reading from the N-terminus, the 967-residue chain is Glutamate receptor 2.6 (967 aa).

A signal peptide spans M1–Q31. Residues E32–E590 are Extracellular-facing. N-linked (GlcNAc...) asparagine glycosylation is found at N45, N57, N121, N336, N345, N424, and N550. The helical transmembrane segment at L591–Y611 threads the bilayer. Topologically, residues Q612–S621 are cytoplasmic. Residues I622 to M642 traverse the membrane as a helical segment. Residues R643–R651 are Cytoplasmic-facing. A helical membrane pass occupies residues V652–L672. Residues T673–S832 lie on the Extracellular side of the membrane. N795 carries an N-linked (GlcNAc...) asparagine glycan. A helical transmembrane segment spans residues F833–V853. The Cytoplasmic portion of the chain corresponds to C854–A967. The segment covering G864–D874 has biased composition (polar residues). Residues G864–D913 are disordered.

It belongs to the glutamate-gated ion channel (TC 1.A.10.1) family. May form heteromers. Expressed predominantly in roots.

It localises to the membrane. Glutamate-gated receptor that probably acts as a non-selective cation channel. May be involved in light-signal transduction and calcium homeostasis via the regulation of calcium influx into cells. This is Glutamate receptor 2.6 (GLR2.6) from Arabidopsis thaliana (Mouse-ear cress).